A 284-amino-acid chain; its full sequence is MTDVPATFTQAECNGDKPPENGQQPITKISEELTDVDSPLPHYRVEPSLEGAPTKGSQEERRKLQGNMLLNSSMEEKILKENPEEKLFVVHKAITDLSLQETSADEMTFREGRQWEKIPLSGSNQEIRRQKERITEQPLKEEEDEDRKNKGHQAAEIEWLGFRKPSQADMLHSKHDEEQKVWDEEIDDDDDDNCNDDEDEVRVIEFKKKHEEVSQFKEEGDASEDSPLSSASSQAVTPDEQPTLGKKSDISRNAYSRYNTISYRKIRKGNTKQRIDEFESMMHL.

Residues 1 to 61 (MTDVPATFTQ…APTKGSQEER (61 aa)) form a disordered region. A Phosphoserine modification is found at serine 73. Positions 108–251 (TFREGRQWEK…PTLGKKSDIS (144 aa)) are disordered. Basic and acidic residues-rich tracts occupy residues 126 to 140 (EIRR…QPLK) and 171 to 183 (LHSK…KVWD). A compositionally biased stretch (acidic residues) spans 184 to 200 (EEIDDDDDDNCNDDEDE). Positions 201–220 (VRVIEFKKKHEEVSQFKEEG) are enriched in basic and acidic residues. 4 positions are modified to phosphoserine: serine 214, serine 226, serine 230, and serine 233. Residues 225–235 (DSPLSSASSQA) show a composition bias toward low complexity. At threonine 237 the chain carries Phosphothreonine. Residues 265-284 (KIRKGNTKQRIDEFESMMHL) are binds actin.

As to quaternary structure, binds actin.

Its subcellular location is the cytoplasm. The protein resides in the cytoskeleton. Plays a role in cytoskeletal rearrangements during the late wrapping and/or compaction phases of myelinogenesis as well as in maintenance and stability of myelin sheath in the adult. May play an important role in late-stage oligodendroglia maturation, myelin/Ranvier node formation during CNS development, and in the maintenance and plasticity of related structures in the mature CNS. This chain is Ermin (ERMN), found in Pongo abelii (Sumatran orangutan).